The primary structure comprises 602 residues: Elongation factor 4 (602 aa).

The tr-type G domain occupies 7-189; sequence DKIRNFSIVA…AIVTRLPPPK (183 aa). GTP contacts are provided by residues 19 to 24 and 136 to 139; these read DHGKST and NKVD.

This sequence belongs to the TRAFAC class translation factor GTPase superfamily. Classic translation factor GTPase family. LepA subfamily.

It is found in the cell inner membrane. The catalysed reaction is GTP + H2O = GDP + phosphate + H(+). Required for accurate and efficient protein synthesis under certain stress conditions. May act as a fidelity factor of the translation reaction, by catalyzing a one-codon backward translocation of tRNAs on improperly translocated ribosomes. Back-translocation proceeds from a post-translocation (POST) complex to a pre-translocation (PRE) complex, thus giving elongation factor G a second chance to translocate the tRNAs correctly. Binds to ribosomes in a GTP-dependent manner. The sequence is that of Elongation factor 4 from Caulobacter vibrioides (strain NA1000 / CB15N) (Caulobacter crescentus).